Reading from the N-terminus, the 427-residue chain is Chitin disaccharide deacetylase (427 aa).

An N-terminal signal peptide occupies residues 1-22; it reads MKLNKLAIATLVSAALSQYAFA. The 299-residue stretch at 28 to 326 folds into the NodB homology domain; it reads GTIYLTFDDG…LAKQAGYVFD (299 aa). Chitin-binding type-3 domains are found at residues 333 to 375 and 382 to 419; these read PNWQ…SSLW and TNWT…TPNS.

It belongs to the polysaccharide deacetylase family. Carbohydrate-binding module 12 subfamily.

It catalyses the reaction N,N'-diacetylchitobiose + H2O = N-acetyl-beta-D-glucosaminyl-(1-&gt;4)-D-glucosamine + acetate. It participates in glycan degradation; chitin degradation. Specifically catalyzes the degradation of N,N'-diacetylchitobiose. Key enzyme in the chitin catabolic cascade. The sequence is that of Chitin disaccharide deacetylase (deaA) from Vibrio alginolyticus.